We begin with the raw amino-acid sequence, 167 residues long: CKLF-like MARVEL transmembrane domain-containing protein 7 (167 aa).

One can recognise an MARVEL domain in the interval 32–158; sequence YPLTHGALFK…SLWLSYKITC (127 aa). Transmembrane regions (helical) follow at residues 35–55, 69–89, 102–122, and 132–152; these read THGA…FICV, FEVV…VHLF, LSEL…SIVI, and LVAG…SLWL.

The protein belongs to the chemokine-like factor family.

The protein localises to the membrane. The polypeptide is CKLF-like MARVEL transmembrane domain-containing protein 7 (Cmtm7) (Mus musculus (Mouse)).